The chain runs to 365 residues: Putative carbonic anhydrase-like protein 1 (365 aa).

Residues 1-25 form the signal peptide; it reads MRFECSHFPLFLIILTCHISPLKSS. Residues 28–356 form the Alpha-carbonic anhydrase domain; sequence YQWSYDSDVF…TNNRLVRTNI (329 aa). Y223 is a catalytic residue. Substrate contacts are provided by residues T295 and 295–296; that span reads TS.

Belongs to the alpha-carbonic anhydrase family.

It localises to the secreted. The sequence is that of Putative carbonic anhydrase-like protein 1 (cah-1) from Caenorhabditis elegans.